Here is a 266-residue protein sequence, read N- to C-terminus: GTP cyclohydrolase FolE2 (266 aa).

The protein belongs to the GTP cyclohydrolase IV family.

It carries out the reaction GTP + H2O = 7,8-dihydroneopterin 3'-triphosphate + formate + H(+). Its pathway is cofactor biosynthesis; 7,8-dihydroneopterin triphosphate biosynthesis; 7,8-dihydroneopterin triphosphate from GTP: step 1/1. Converts GTP to 7,8-dihydroneopterin triphosphate. This Burkholderia mallei (strain ATCC 23344) protein is GTP cyclohydrolase FolE2.